We begin with the raw amino-acid sequence, 224 residues long: Probable molybdenum cofactor guanylyltransferase (224 aa).

GTP is bound by residues 20–22 (LAG), Lys33, Asp88, and Asp117. Asp117 lines the Mg(2+) pocket.

The protein belongs to the MobA family. Requires Mg(2+) as cofactor.

It localises to the cytoplasm. The catalysed reaction is Mo-molybdopterin + GTP + H(+) = Mo-molybdopterin guanine dinucleotide + diphosphate. Transfers a GMP moiety from GTP to Mo-molybdopterin (Mo-MPT) cofactor (Moco or molybdenum cofactor) to form Mo-molybdopterin guanine dinucleotide (Mo-MGD) cofactor. This Methanosarcina mazei (strain ATCC BAA-159 / DSM 3647 / Goe1 / Go1 / JCM 11833 / OCM 88) (Methanosarcina frisia) protein is Probable molybdenum cofactor guanylyltransferase.